The primary structure comprises 430 residues: Aspartate aminotransferase, mitochondrial (430 aa).

A mitochondrion-targeting transit peptide spans 1-29; it reads MALLHSSRILSGMAAAFHPGLAAAASARA. A Phosphothreonine modification is found at threonine 48. The residue at position 59 (lysine 59) is an N6-acetyllysine. Glycine 65 is a substrate binding site. Position 73 is an N6-acetyllysine; alternate (lysine 73). N6-succinyllysine; alternate is present on lysine 73. Residue lysine 82 is modified to N6-acetyllysine. An N6-acetyllysine; alternate modification is found at lysine 90. Position 90 is an N6-succinyllysine; alternate (lysine 90). Tyrosine 96 is modified (3'-nitrotyrosine; alternate). Tyrosine 96 carries the phosphotyrosine; alternate modification. An N6-acetyllysine; alternate mark is found at lysine 107 and lysine 122. N6-succinyllysine; alternate is present on residues lysine 107 and lysine 122. A Phosphoserine modification is found at serine 143. The residue at position 159 (lysine 159) is an N6-acetyllysine; alternate. Lysine 159 bears the N6-succinyllysine; alternate mark. Tryptophan 162 contributes to the substrate binding site. Lysine 185 bears the N6-acetyllysine; alternate mark. Lysine 185 carries the N6-succinyllysine; alternate modification. Position 215 (asparagine 215) interacts with substrate. Lysine 227 carries the N6-succinyllysine modification. The residue at position 234 (lysine 234) is an N6-acetyllysine. An N6-acetyllysine; alternate mark is found at lysine 279 and lysine 296. Residue lysine 279 is modified to N6-(pyridoxal phosphate)lysine; alternate. N6-succinyllysine; alternate is present on lysine 296. Lysine 302 carries the post-translational modification N6-acetyllysine. Residue lysine 309 is modified to N6-acetyllysine; alternate. Position 309 is an N6-succinyllysine; alternate (lysine 309). Arginine 313 carries the asymmetric dimethylarginine modification. Lysine 338 is subject to N6-acetyllysine; alternate. Lysine 338 is modified (N6-succinyllysine; alternate). The residue at position 345 (lysine 345) is an N6-acetyllysine. Lysine 363 is subject to N6-acetyllysine; alternate. Lysine 363 bears the N6-succinyllysine; alternate mark. An N6-acetyllysine mark is found at lysine 364 and lysine 387. 2 positions are modified to N6-acetyllysine; alternate: lysine 396 and lysine 404. Residues lysine 396 and lysine 404 each carry the N6-succinyllysine; alternate modification. Arginine 407 serves as a coordination point for substrate.

This sequence belongs to the class-I pyridoxal-phosphate-dependent aminotransferase family. As to quaternary structure, homodimer. Pyridoxal 5'-phosphate serves as cofactor. Acetylation of Lys-296, Lys-345 and Lys-363 is observed in liver mitochondria from fasted mice but not from fed mice. As to expression, detected in brain (at protein level).

The protein resides in the mitochondrion matrix. It is found in the cell membrane. The enzyme catalyses L-aspartate + 2-oxoglutarate = oxaloacetate + L-glutamate. It carries out the reaction L-kynurenine + 2-oxoglutarate = kynurenate + L-glutamate + H2O. Functionally, catalyzes the irreversible transamination of the L-tryptophan metabolite L-kynurenine to form kynurenic acid (KA). As a member of the malate-aspartate shuttle, it has a key role in the intracellular NAD(H) redox balance. Is important for metabolite exchange between mitochondria and cytosol, and for amino acid metabolism. Facilitates cellular uptake of long-chain free fatty acids. In Mus musculus (Mouse), this protein is Aspartate aminotransferase, mitochondrial (Got2).